Consider the following 82-residue polypeptide: Cytochrome b559 subunit alpha (82 aa).

A helical membrane pass occupies residues Val21 to Trp35. His23 contributes to the heme binding site.

Belongs to the PsbE/PsbF family. Heterodimer of an alpha subunit and a beta subunit. PSII is composed of 1 copy each of membrane proteins PsbA, PsbB, PsbC, PsbD, PsbE, PsbF, PsbH, PsbI, PsbJ, PsbK, PsbL, PsbM, PsbT, PsbX, PsbY, PsbZ, Psb30/Ycf12, at least 3 peripheral proteins of the oxygen-evolving complex and a large number of cofactors. It forms dimeric complexes. The cofactor is heme b.

It localises to the plastid. The protein resides in the chloroplast thylakoid membrane. This b-type cytochrome is tightly associated with the reaction center of photosystem II (PSII). PSII is a light-driven water:plastoquinone oxidoreductase that uses light energy to abstract electrons from H(2)O, generating O(2) and a proton gradient subsequently used for ATP formation. It consists of a core antenna complex that captures photons, and an electron transfer chain that converts photonic excitation into a charge separation. This Stigeoclonium helveticum (Green alga) protein is Cytochrome b559 subunit alpha.